The following is a 150-amino-acid chain: Large ribosomal subunit protein bL9 (150 aa).

The protein belongs to the bacterial ribosomal protein bL9 family.

In terms of biological role, binds to the 23S rRNA. This Desulforudis audaxviator (strain MP104C) protein is Large ribosomal subunit protein bL9.